Reading from the N-terminus, the 203-residue chain is Ribonuclease HII (203 aa).

The RNase H type-2 domain occupies 15–201; sequence LLVAGLDEAG…VAQAPLRFPE (187 aa). Residues aspartate 21, glutamate 22, and aspartate 111 each coordinate a divalent metal cation.

Belongs to the RNase HII family. Requires Mn(2+) as cofactor. Mg(2+) serves as cofactor.

It is found in the cytoplasm. The catalysed reaction is Endonucleolytic cleavage to 5'-phosphomonoester.. In terms of biological role, endonuclease that specifically degrades the RNA of RNA-DNA hybrids. The polypeptide is Ribonuclease HII (Thermus thermophilus (strain ATCC 27634 / DSM 579 / HB8)).